Here is a 182-residue protein sequence, read N- to C-terminus: MIKEIINVVHGTFTQLRSLVMIFGHAFRKRDTLQYPEEPVYLPPRYRGRIVLTRDPDGEERCVACNLCAVACPVGCISLQKAETEDGRWYPEFFRINFSRCIFCGLCEEACPTTAIQLTPDFEMGEFKRQDLVYEKHDLLISGPGKNPDYNYYRVAGMAIAGKPKGAAQNEAEPINVKSLLP.

4Fe-4S ferredoxin-type domains lie at 52-82 (LTRD…LQKA) and 92-121 (EFFR…LTPD). [4Fe-4S] cluster is bound by residues C62, C65, C68, C72, C101, C104, C107, and C111.

The protein belongs to the complex I 23 kDa subunit family. NDH-1 is composed of 13 different subunits. Subunits NuoA, H, J, K, L, M, N constitute the membrane sector of the complex. Requires [4Fe-4S] cluster as cofactor.

The protein resides in the cell inner membrane. It carries out the reaction a quinone + NADH + 5 H(+)(in) = a quinol + NAD(+) + 4 H(+)(out). In terms of biological role, NDH-1 shuttles electrons from NADH, via FMN and iron-sulfur (Fe-S) centers, to quinones in the respiratory chain. The immediate electron acceptor for the enzyme in this species is believed to be ubiquinone. Couples the redox reaction to proton translocation (for every two electrons transferred, four hydrogen ions are translocated across the cytoplasmic membrane), and thus conserves the redox energy in a proton gradient. The chain is NADH-quinone oxidoreductase subunit I from Pseudomonas aeruginosa (strain LESB58).